Reading from the N-terminus, the 493-residue chain is Serine/threonine-protein kinase PBL34 (493 aa).

Disordered regions lie at residues 1-42 (MGLD…EEEE) and 84-117 (SKSA…TPVI). A lipid anchor (N-myristoyl glycine) is attached at G2. Residues 12-37 (WKSEKPKETENKNHKKKNGDDNKSRN) show a composition bias toward basic and acidic residues. Positions 100-114 (SSTTTTSNAESSSST) are enriched in low complexity. T131 carries the phosphothreonine modification. In terms of domain architecture, Protein kinase spans 142–428 (FRPESLLGEG…VEALKPLPHL (287 aa)). ATP contacts are provided by residues 148-156 (LGEGGFGCV) and K180. Y225 carries the phosphotyrosine modification. D275 (proton acceptor) is an active-site residue. Position 279 is a phosphoserine (S279). At T306 the chain carries Phosphothreonine. Residue S309 is modified to Phosphoserine. Residues T310 and T315 each carry the phosphothreonine modification. Y323 carries the phosphotyrosine modification. The tract at residues 447–493 (KNGSGRSQGFGSRNGQHQPVFRTLSSPHGSSPYRHQIPSPKPKGATT) is disordered. The segment covering 450–475 (SGRSQGFGSRNGQHQPVFRTLSSPHG) has biased composition (polar residues).

The protein belongs to the protein kinase superfamily. Ser/Thr protein kinase family. In terms of assembly, interacts with the Xanthomonas campestris effector XopAC/AvrAC. Interacts with SD129. Phosphorylated by SD129 at Thr-306 and Thr-310 in response to the pathogen-associated molecular pattern (PAMP) 3-OH-C10:0, a medium-chain 3-hydroxy fatty acid.

The protein localises to the cell membrane. It carries out the reaction L-seryl-[protein] + ATP = O-phospho-L-seryl-[protein] + ADP + H(+). The enzyme catalyses L-threonyl-[protein] + ATP = O-phospho-L-threonyl-[protein] + ADP + H(+). Its function is as follows. Involved in chitin-triggered immune signaling and is required for reactive oxygen species (ROS) production. Acts downstream of SD129 in defense signaling triggered by the pathogen-associated molecular pattern (PAMP) 3-OH-C10:0, a medium-chain 3-hydroxy fatty acid. In Arabidopsis thaliana (Mouse-ear cress), this protein is Serine/threonine-protein kinase PBL34.